Consider the following 109-residue polypeptide: Peptide chaperone MftB (109 aa).

It belongs to the peptide chaperone MftB family.

Its function is as follows. Peptide chaperone involved in the biosynthesis of the enzyme cofactor mycofactocin (MFT). Binds MftA and MftC with high affinity, and is essential for MftC activity on MftA, likely via the formation of a ternary complex. This is Peptide chaperone MftB from Mycobacterium tuberculosis (strain ATCC 25618 / H37Rv).